Here is a 183-residue protein sequence, read N- to C-terminus: Oligoribonuclease (183 aa).

The Exonuclease domain occupies 8 to 171 (LIWIDLEMTG…DDIRDSIHEL (164 aa)). Tyr-129 is a catalytic residue.

It belongs to the oligoribonuclease family.

The protein resides in the cytoplasm. Its function is as follows. 3'-to-5' exoribonuclease specific for small oligoribonucleotides. The polypeptide is Oligoribonuclease (Halorhodospira halophila (strain DSM 244 / SL1) (Ectothiorhodospira halophila (strain DSM 244 / SL1))).